Consider the following 155-residue polypeptide: Large ribosomal subunit protein eL24B (155 aa).

Ser-7 carries the phosphoserine modification. The disordered stretch occupies residues 66–155 (EVAKKRSRKT…AFQKVAATSR (90 aa)). Basic and acidic residues predominate over residues 89–129 (LIKERRSLKPEVRKANREEKLKANKEKKRAEKAARKAEKAK).

It belongs to the eukaryotic ribosomal protein eL24 family. In terms of assembly, component of the large ribosomal subunit (LSU). Mature yeast ribosomes consist of a small (40S) and a large (60S) subunit. The 40S small subunit contains 1 molecule of ribosomal RNA (18S rRNA) and 33 different proteins (encoded by 57 genes). The large 60S subunit contains 3 rRNA molecules (25S, 5.8S and 5S rRNA) and 46 different proteins (encoded by 81 genes).

The protein localises to the cytoplasm. Functionally, component of the ribosome, a large ribonucleoprotein complex responsible for the synthesis of proteins in the cell. The small ribosomal subunit (SSU) binds messenger RNAs (mRNAs) and translates the encoded message by selecting cognate aminoacyl-transfer RNA (tRNA) molecules. The large subunit (LSU) contains the ribosomal catalytic site termed the peptidyl transferase center (PTC), which catalyzes the formation of peptide bonds, thereby polymerizing the amino acids delivered by tRNAs into a polypeptide chain. The nascent polypeptides leave the ribosome through a tunnel in the LSU and interact with protein factors that function in enzymatic processing, targeting, and the membrane insertion of nascent chains at the exit of the ribosomal tunnel. In Saccharomyces cerevisiae (strain ATCC 204508 / S288c) (Baker's yeast), this protein is Large ribosomal subunit protein eL24B.